Consider the following 354-residue polypeptide: Pyruvate dehydrogenase E1 component subunit alpha (354 aa).

The tract at residues 1–29 (MAKATQDSNRPHKADVGSAIPNHDLPPIP) is disordered.

In terms of assembly, heterodimer of an alpha and a beta chain. Requires thiamine diphosphate as cofactor.

It carries out the reaction N(6)-[(R)-lipoyl]-L-lysyl-[protein] + pyruvate + H(+) = N(6)-[(R)-S(8)-acetyldihydrolipoyl]-L-lysyl-[protein] + CO2. Its function is as follows. The pyruvate dehydrogenase complex catalyzes the overall conversion of pyruvate to acetyl-CoA and CO(2). It contains multiple copies of three enzymatic components: pyruvate dehydrogenase (E1), dihydrolipoamide acetyltransferase (E2) and lipoamide dehydrogenase (E3). The protein is Pyruvate dehydrogenase E1 component subunit alpha (pdhA) of Zymomonas mobilis subsp. mobilis (strain ATCC 31821 / ZM4 / CP4).